Consider the following 148-residue polypeptide: SsrA-binding protein (148 aa).

The protein belongs to the SmpB family.

The protein localises to the cytoplasm. Required for rescue of stalled ribosomes mediated by trans-translation. Binds to transfer-messenger RNA (tmRNA), required for stable association of tmRNA with ribosomes. tmRNA and SmpB together mimic tRNA shape, replacing the anticodon stem-loop with SmpB. tmRNA is encoded by the ssrA gene; the 2 termini fold to resemble tRNA(Ala) and it encodes a 'tag peptide', a short internal open reading frame. During trans-translation Ala-aminoacylated tmRNA acts like a tRNA, entering the A-site of stalled ribosomes, displacing the stalled mRNA. The ribosome then switches to translate the ORF on the tmRNA; the nascent peptide is terminated with the 'tag peptide' encoded by the tmRNA and targeted for degradation. The ribosome is freed to recommence translation, which seems to be the essential function of trans-translation. This Burkholderia ambifaria (strain ATCC BAA-244 / DSM 16087 / CCUG 44356 / LMG 19182 / AMMD) (Burkholderia cepacia (strain AMMD)) protein is SsrA-binding protein.